Here is a 321-residue protein sequence, read N- to C-terminus: Peroxidase 5 (321 aa).

Positions 1-24 are cleaved as a signal peptide; that stretch reads MERFSLRFVLMMVSIILTSSICQA. A Pyrrolidone carboxylic acid modification is found at Gln-25. Intrachain disulfides connect Cys-35–Cys-115, Cys-68–Cys-73, Cys-121–Cys-317, and Cys-201–Cys-227. His-66 (proton acceptor) is an active-site residue. 5 residues coordinate Ca(2+): Asp-67, Val-70, Gly-72, Asp-74, and Ser-76. Residue Pro-164 coordinates substrate. Heme b is bound at residue His-194. A Ca(2+)-binding site is contributed by Thr-195. Asn-211 carries N-linked (GlcNAc...) asparagine glycosylation. The Ca(2+) site is built by Asp-240, Thr-243, and Asp-248. N-linked (GlcNAc...) asparagine glycosylation occurs at Asn-285.

The protein belongs to the peroxidase family. Classical plant (class III) peroxidase subfamily. Requires heme b as cofactor. The cofactor is Ca(2+).

Its subcellular location is the secreted. The catalysed reaction is 2 a phenolic donor + H2O2 = 2 a phenolic radical donor + 2 H2O. Its function is as follows. Removal of H(2)O(2), oxidation of toxic reductants, biosynthesis and degradation of lignin, suberization, auxin catabolism, response to environmental stresses such as wounding, pathogen attack and oxidative stress. These functions might be dependent on each isozyme/isoform in each plant tissue. The chain is Peroxidase 5 (PER5) from Arabidopsis thaliana (Mouse-ear cress).